A 121-amino-acid polypeptide reads, in one-letter code: Small ribosomal subunit protein uS13 (121 aa).

The disordered stretch occupies residues 92-121 (RKGLPVRGQSSKTNARTVKGPRKTVANKKK). The span at 110–121 (KGPRKTVANKKK) shows a compositional bias: basic residues.

The protein belongs to the universal ribosomal protein uS13 family. In terms of assembly, part of the 30S ribosomal subunit. Forms a loose heterodimer with protein S19. Forms two bridges to the 50S subunit in the 70S ribosome.

Located at the top of the head of the 30S subunit, it contacts several helices of the 16S rRNA. In the 70S ribosome it contacts the 23S rRNA (bridge B1a) and protein L5 of the 50S subunit (bridge B1b), connecting the 2 subunits; these bridges are implicated in subunit movement. Contacts the tRNAs in the A and P-sites. The sequence is that of Small ribosomal subunit protein uS13 from Mycoplasma capricolum subsp. capricolum (strain California kid / ATCC 27343 / NCTC 10154).